We begin with the raw amino-acid sequence, 280 residues long: 2-dehydro-3-deoxyphosphooctonate aldolase (280 aa).

This sequence belongs to the KdsA family.

The protein localises to the cytoplasm. The enzyme catalyses D-arabinose 5-phosphate + phosphoenolpyruvate + H2O = 3-deoxy-alpha-D-manno-2-octulosonate-8-phosphate + phosphate. Its pathway is carbohydrate biosynthesis; 3-deoxy-D-manno-octulosonate biosynthesis; 3-deoxy-D-manno-octulosonate from D-ribulose 5-phosphate: step 2/3. It participates in bacterial outer membrane biogenesis; lipopolysaccharide biosynthesis. The sequence is that of 2-dehydro-3-deoxyphosphooctonate aldolase from Coxiella burnetii (strain CbuG_Q212) (Coxiella burnetii (strain Q212)).